The following is a 93-amino-acid chain: Cytochrome c oxidase polypeptide 6, mitochondrial (93 aa).

The Mitochondrial matrix portion of the chain corresponds to S2–K33. The chain crosses the membrane as a helical span at residues G34–A53. Over K54–I93 the chain is Mitochondrial intermembrane.

The protein belongs to the cytochrome c oxidase IV family. Component of the cytochrome c oxidase (complex IV, CIV), a multisubunit enzyme composed of a catalytic core of 3 subunits and seevral supernumerary subunits. The complex exists as a monomer or a dimer and forms supercomplexes (SCs) in the inner mitochondrial membrane with ubiquinol-cytochrome c oxidoreductase (cytochrome b-c1 complex, complex III, CIII).

It is found in the mitochondrion inner membrane. The protein operates within energy metabolism; oxidative phosphorylation. In terms of biological role, component of the cytochrome c oxidase, the last enzyme in the mitochondrial electron transport chain which drives oxidative phosphorylation. The respiratory chain contains 3 multisubunit complexes succinate dehydrogenase (complex II, CII), ubiquinol-cytochrome c oxidoreductase (cytochrome b-c1 complex, complex III, CIII) and cytochrome c oxidase (complex IV, CIV), that cooperate to transfer electrons derived from NADH and succinate to molecular oxygen, creating an electrochemical gradient over the inner membrane that drives transmembrane transport and the ATP synthase. Cytochrome c oxidase is the component of the respiratory chain that catalyzes the reduction of oxygen to water. Electrons originating from reduced cytochrome c in the intermembrane space (IMS) are transferred via the dinuclear copper A center (CU(A)) of subunit 2 and heme A of subunit 1 to the active site in subunit 1, a binuclear center (BNC) formed by heme A3 and copper B (CU(B)). The BNC reduces molecular oxygen to 2 water molecules using 4 electrons from cytochrome c in the IMS and 4 protons from the mitochondrial matrix. This is Cytochrome c oxidase polypeptide 6, mitochondrial (cxfA) from Dictyostelium discoideum (Social amoeba).